Here is a 494-residue protein sequence, read N- to C-terminus: UDP-N-acetylmuramoyl-L-alanyl-D-glutamate--L-lysine ligase (494 aa).

Serine 30 lines the UDP-N-acetyl-alpha-D-muramoyl-L-alanyl-D-glutamate pocket. 110 to 116 contributes to the ATP binding site; it reads GTNGKTS. UDP-N-acetyl-alpha-D-muramoyl-L-alanyl-D-glutamate-binding positions include 152–153, serine 179, and arginine 187; that span reads TT. An N6-carboxylysine modification is found at lysine 219. The L-lysine recognition motif signature appears at 406-409; the sequence is DNPA.

It belongs to the MurCDEF family. MurE subfamily. Carboxylation is probably crucial for Mg(2+) binding and, consequently, for the gamma-phosphate positioning of ATP.

Its subcellular location is the cytoplasm. It catalyses the reaction UDP-N-acetyl-alpha-D-muramoyl-L-alanyl-D-glutamate + L-lysine + ATP = UDP-N-acetyl-alpha-D-muramoyl-L-alanyl-gamma-D-glutamyl-L-lysine + ADP + phosphate + H(+). It participates in cell wall biogenesis; peptidoglycan biosynthesis. Catalyzes the addition of L-lysine to the nucleotide precursor UDP-N-acetylmuramoyl-L-alanyl-D-glutamate (UMAG) in the biosynthesis of bacterial cell-wall peptidoglycan. In Staphylococcus haemolyticus (strain JCSC1435), this protein is UDP-N-acetylmuramoyl-L-alanyl-D-glutamate--L-lysine ligase.